We begin with the raw amino-acid sequence, 788 residues long: Glycerol-3-phosphate acyltransferase (788 aa).

The disordered stretch occupies residues 104-135; it reads LLPGRDPYHPNPRQQRRILRSDPQRARVMAGE. The HXXXXD motif signature appears at 271 to 276; that stretch reads SHRSYI.

The protein belongs to the GPAT/DAPAT family.

It is found in the cell membrane. It catalyses the reaction sn-glycerol 3-phosphate + an acyl-CoA = a 1-acyl-sn-glycero-3-phosphate + CoA. It functions in the pathway phospholipid metabolism; CDP-diacylglycerol biosynthesis; CDP-diacylglycerol from sn-glycerol 3-phosphate: step 1/3. The protein is Glycerol-3-phosphate acyltransferase of Mycobacterium marinum (strain ATCC BAA-535 / M).